The primary structure comprises 336 residues: Ribosomal RNA large subunit methyltransferase F (336 aa).

It belongs to the methyltransferase superfamily. METTL16/RlmF family.

The protein resides in the cytoplasm. The enzyme catalyses adenosine(1618) in 23S rRNA + S-adenosyl-L-methionine = N(6)-methyladenosine(1618) in 23S rRNA + S-adenosyl-L-homocysteine + H(+). Specifically methylates the adenine in position 1618 of 23S rRNA. In Serratia proteamaculans (strain 568), this protein is Ribosomal RNA large subunit methyltransferase F.